Reading from the N-terminus, the 251-residue chain is Putative cysteine-rich repeat secretory protein 36 (251 aa).

The first 28 residues, 1-28 (MHSSYSLSKCLVCFTILAIQTLIRRVSS), serve as a signal peptide directing secretion. Gnk2-homologous domains lie at 35-139 (YLNH…NSPP) and 144-248 (YENT…LYPF).

It belongs to the cysteine-rich repeat secretory protein family.

It localises to the secreted. This chain is Putative cysteine-rich repeat secretory protein 36 (CRRSP36), found in Arabidopsis thaliana (Mouse-ear cress).